Here is a 511-residue protein sequence, read N- to C-terminus: Ribonuclease E/G-like protein (511 aa).

Positions 35–117 (SDIYLGTVDK…LTANITLSGR (83 aa)) constitute an S1 motif domain. Mg(2+)-binding residues include D296 and D339.

This sequence belongs to the RNase E/G family. Mg(2+) serves as cofactor.

The protein localises to the plastid. The protein resides in the chloroplast stroma. Involved in intercistronic processing of primary transcripts from chloroplast operons. The endonucleolytic activity of the enzyme depends on the number of phosphates at the 5' end, is inhibited by structured RNA, and preferentially cleaves A/U-rich sequences. This Porphyra purpurea (Red seaweed) protein is Ribonuclease E/G-like protein (rne).